The chain runs to 449 residues: 4-aminobutyrate aminotransferase (449 aa).

K294 is modified (N6-(pyridoxal phosphate)lysine).

Belongs to the class-III pyridoxal-phosphate-dependent aminotransferase family. Pyridoxal 5'-phosphate serves as cofactor.

It catalyses the reaction 4-aminobutanoate + 2-oxoglutarate = succinate semialdehyde + L-glutamate. The catalysed reaction is (S)-3-amino-2-methylpropanoate + 2-oxoglutarate = 2-methyl-3-oxopropanoate + L-glutamate. The protein operates within amino-acid degradation; 4-aminobutanoate degradation. The protein is 4-aminobutyrate aminotransferase (gabT) of Mycobacterium bovis (strain ATCC BAA-935 / AF2122/97).